Consider the following 428-residue polypeptide: Forkhead box protein B2 (428 aa).

The fork-head DNA-binding region spans Gln-12 to Leu-103. 2 disordered regions span residues His-118–Ala-217 and Pro-408–Ser-428. Residues Leu-136–Pro-163 show a composition bias toward basic residues. Pro residues-rich tracts occupy residues Pro-164–Met-174 and Ala-183–Pro-192. Positions Ser-193 to Ala-217 are enriched in low complexity.

Its subcellular location is the nucleus. In terms of biological role, transcription factor. The polypeptide is Forkhead box protein B2 (Foxb2) (Mus musculus (Mouse)).